Here is a 664-residue protein sequence, read N- to C-terminus: Translation factor GUF1, mitochondrial (664 aa).

Positions 63–246 (SNYRNFSIVA…SIINNIPPPQ (184 aa)) constitute a tr-type G domain. Residues 72 to 79 (AHVDHGKS), 139 to 143 (DTPGH), and 193 to 196 (NKID) contribute to the GTP site.

Belongs to the TRAFAC class translation factor GTPase superfamily. Classic translation factor GTPase family. LepA subfamily.

It localises to the mitochondrion inner membrane. It carries out the reaction GTP + H2O = GDP + phosphate + H(+). Promotes mitochondrial protein synthesis. May act as a fidelity factor of the translation reaction, by catalyzing a one-codon backward translocation of tRNAs on improperly translocated ribosomes. Binds to mitochondrial ribosomes in a GTP-dependent manner. The chain is Translation factor GUF1, mitochondrial from Clavispora lusitaniae (strain ATCC 42720) (Yeast).